The following is a 193-amino-acid chain: Probable GTP-binding protein EngB (193 aa).

In terms of domain architecture, EngB-type G spans 22-193 (GLPEFAFAGR…LIAVLESYLA (172 aa)). GTP is bound by residues 30–37 (GRSNVGKS), 57–61 (GKTQG), 75–78 (DLPG), 142–145 (TKID), and 173–175 (FSS). Mg(2+) is bound by residues S37 and T59.

It belongs to the TRAFAC class TrmE-Era-EngA-EngB-Septin-like GTPase superfamily. EngB GTPase family. It depends on Mg(2+) as a cofactor.

Necessary for normal cell division and for the maintenance of normal septation. This chain is Probable GTP-binding protein EngB, found in Desulfotalea psychrophila (strain LSv54 / DSM 12343).